Here is a 1072-residue protein sequence, read N- to C-terminus: DNA-directed RNA polymerase subunit beta (1072 aa).

This sequence belongs to the RNA polymerase beta chain family. As to quaternary structure, in plastids the minimal PEP RNA polymerase catalytic core is composed of four subunits: alpha, beta, beta', and beta''. When a (nuclear-encoded) sigma factor is associated with the core the holoenzyme is formed, which can initiate transcription.

Its subcellular location is the plastid. It localises to the chloroplast. It catalyses the reaction RNA(n) + a ribonucleoside 5'-triphosphate = RNA(n+1) + diphosphate. Its function is as follows. DNA-dependent RNA polymerase catalyzes the transcription of DNA into RNA using the four ribonucleoside triphosphates as substrates. This is DNA-directed RNA polymerase subunit beta from Arabis hirsuta (Hairy rock-cress).